We begin with the raw amino-acid sequence, 434 residues long: uncharacterized protein (434 aa).

At Lys216 the chain carries N6-(pyridoxal phosphate)lysine.

This is an uncharacterized protein from Schizosaccharomyces pombe (strain 972 / ATCC 24843) (Fission yeast).